Consider the following 959-residue polypeptide: Probable LRR receptor-like serine/threonine-protein kinase At5g37450 (959 aa).

Residues 1–24 form the signal peptide; it reads MKEMMGVVGIILVVSSCCLSLLDA. Residues 25-565 lie on the Extracellular side of the membrane; the sequence is QEITHPTDVS…SGMSIGVSVG (541 aa). N-linked (GlcNAc...) asparagine glycans are attached at residues Asn62, Asn88, Asn102, and Asn123. 9 LRR repeats span residues 79 to 100, 101 to 124, 125 to 148, 149 to 172, 173 to 198, 200 to 220, 221 to 244, 246 to 268, and 269 to 292; these read VKEL…LGLL, SNLT…LGNL, THLI…LGSL, SNLL…LANL, KKLK…TLTN, LHFL…LAQM, PSLR…SYGS, PNLV…LSKS, and LVLY…KFSA. Asn182 carries an N-linked (GlcNAc...) asparagine glycan. N-linked (GlcNAc...) asparagine glycans are attached at residues Asn293, Asn311, Asn327, Asn358, Asn369, and Asn510. LRR repeat units follow at residues 294–314, 315–338, and 341–366; these read ITTI…NFSG, LPRL…IWEN, and LKAE…LLNP. Residues 566 to 586 form a helical membrane-spanning segment; that stretch reads IIIGAIAFFLVLSSLALVFFI. Residues 587–959 are Cytoplasmic-facing; sequence KRSKRKRKTR…SGVIPSIAPR (373 aa). The region spanning 631–906 is the Protein kinase domain; that stretch reads FSDLSQIGRG…RELENIYGLI (276 aa). Residues 637-645 and Lys659 contribute to the ATP site; that span reads IGRGGYGKV. The active-site Proton acceptor is Asp755.

Belongs to the protein kinase superfamily. Ser/Thr protein kinase family.

It is found in the membrane. The enzyme catalyses L-seryl-[protein] + ATP = O-phospho-L-seryl-[protein] + ADP + H(+). The catalysed reaction is L-threonyl-[protein] + ATP = O-phospho-L-threonyl-[protein] + ADP + H(+). This is Probable LRR receptor-like serine/threonine-protein kinase At5g37450 from Arabidopsis thaliana (Mouse-ear cress).